We begin with the raw amino-acid sequence, 242 residues long: Triosephosphate isomerase (242 aa).

8–10 (NWK) is a substrate binding site. Residue His-98 is the Electrophile of the active site. The active-site Proton acceptor is the Glu-167. Residues Gly-173, Ser-205, and 226 to 227 (GG) each bind substrate.

The protein belongs to the triosephosphate isomerase family. As to quaternary structure, homodimer.

It is found in the cytoplasm. It catalyses the reaction D-glyceraldehyde 3-phosphate = dihydroxyacetone phosphate. It participates in carbohydrate biosynthesis; gluconeogenesis. The protein operates within carbohydrate degradation; glycolysis; D-glyceraldehyde 3-phosphate from glycerone phosphate: step 1/1. Its function is as follows. Involved in the gluconeogenesis. Catalyzes stereospecifically the conversion of dihydroxyacetone phosphate (DHAP) to D-glyceraldehyde-3-phosphate (G3P). In Mesomycoplasma hyopneumoniae (strain 232) (Mycoplasma hyopneumoniae), this protein is Triosephosphate isomerase.